The chain runs to 164 residues: Putative 4-hydroxy-4-methyl-2-oxoglutarate aldolase (164 aa).

Substrate-binding positions include 80–83 (GGNL) and R102. D103 serves as a coordination point for a divalent metal cation.

It belongs to the class II aldolase/RraA-like family. As to quaternary structure, homotrimer. A divalent metal cation serves as cofactor.

The enzyme catalyses 4-hydroxy-4-methyl-2-oxoglutarate = 2 pyruvate. The catalysed reaction is oxaloacetate + H(+) = pyruvate + CO2. Its function is as follows. Catalyzes the aldol cleavage of 4-hydroxy-4-methyl-2-oxoglutarate (HMG) into 2 molecules of pyruvate. Also contains a secondary oxaloacetate (OAA) decarboxylase activity due to the common pyruvate enolate transition state formed following C-C bond cleavage in the retro-aldol and decarboxylation reactions. This Burkholderia multivorans (strain ATCC 17616 / 249) protein is Putative 4-hydroxy-4-methyl-2-oxoglutarate aldolase.